The chain runs to 402 residues: D-mannonate dehydratase (402 aa).

Residues Asn-37 and His-122 each coordinate substrate. The active-site Proton donor/acceptor is Tyr-159. Asp-210 contributes to the Mg(2+) binding site. His-212 (proton donor/acceptor) is an active-site residue. 2 residues coordinate Mg(2+): Glu-236 and Glu-262. Glu-262, Arg-283, His-312, Asp-316, and Glu-339 together coordinate substrate.

The protein belongs to the mandelate racemase/muconate lactonizing enzyme family. GalD subfamily. Mg(2+) serves as cofactor.

The catalysed reaction is D-mannonate = 2-dehydro-3-deoxy-D-gluconate + H2O. It functions in the pathway carbohydrate metabolism; pentose and glucuronate interconversion. Functionally, catalyzes the dehydration of D-mannonate. Has no detectable activity with a panel of 70 other acid sugars (in vitro). In Rhizorhabdus wittichii (strain DSM 6014 / CCUG 31198 / JCM 15750 / NBRC 105917 / EY 4224 / RW1) (Sphingomonas wittichii), this protein is D-mannonate dehydratase.